The following is a 573-amino-acid chain: E3 ubiquitin-protein ligase TRIM23 (573 aa).

Residues 31-76 (CGVCEDVFSLQGDKVPRLLLCGHTVCHDCLTRLPLHGRAIRCPFDR) form an RING-type; degenerate zinc finger. Residues 122–168 (ESIIRCDEDEAHVASVYCTVCATHLCSECSQVTHSTKTLAKHRRVPL) form a B box-type; degenerate zinc finger. Residues 351–378 (RVVLAKQEITRLLETLQKQQQQFTEVAD) adopt a coiled-coil conformation. An ARF-like region spans residues 390-573 (FTKDNRVYHG…LVAAGVLDVA (184 aa)). GTP contacts are provided by residues 411–418 (LDGAGKTT), 454–458 (VGGKH), and 513–516 (KQDV).

In the C-terminal section; belongs to the small GTPase superfamily. Arf family. In terms of assembly, homodimer. Interacts with PSCD1. Interacts with UBE2D2. Interacts with TBK1 (via N-terminal kinase domain) and p62/SQSTM1.

It localises to the cytoplasm. The protein resides in the endomembrane system. Its subcellular location is the golgi apparatus membrane. It is found in the lysosome membrane. It catalyses the reaction S-ubiquitinyl-[E2 ubiquitin-conjugating enzyme]-L-cysteine + [acceptor protein]-L-lysine = [E2 ubiquitin-conjugating enzyme]-L-cysteine + N(6)-ubiquitinyl-[acceptor protein]-L-lysine.. The protein operates within protein modification; protein ubiquitination. In terms of biological role, acts as an E3 ubiquitin-protein ligase. Plays an essential role in autophagy activation during viral infection. Mechanistically, activates TANK-binding kinase 1/TBK1 by facilitating its dimerization and ability to phosphorylate the selective autophagy receptor SQSTM1. In order to achieve this function, TRIM23 mediates 'Lys-27'-linked auto-ubiquitination of its ADP-ribosylation factor (ARF) domain to induce its GTPase activity and its recruitment to autophagosomes. The polypeptide is E3 ubiquitin-protein ligase TRIM23 (Trim23) (Rattus norvegicus (Rat)).